The chain runs to 282 residues: Endonuclease V (282 aa).

Residues aspartate 52 and aspartate 126 each coordinate Mg(2+). The interval 250–282 (SLGLPGPPTPRSPKAQRPVACPKGDSGESSALC) is disordered.

This sequence belongs to the endonuclease V family. As to quaternary structure, monomer. Interacts with PABPC1; the interaction is RNA-dependent and stimulates ENDOV activity. Requires Mg(2+) as cofactor.

The protein resides in the cytoplasm. It is found in the nucleus. The protein localises to the nucleolus. It localises to the stress granule. Its activity is regulated as follows. Inhibited by normal intracellular concentrations of ATP. Functionally, endoribonuclease that specifically cleaves inosine-containing RNAs: cleaves RNA at the second phosphodiester bond 3' to inosine. Active against both single-stranded and double-stranded RNAs. Has strong preference for single-stranded RNAs (ssRNAs) toward double-stranded RNAs (dsRNAs). Cleaves mRNAs and tRNAs containing inosine. Also able to cleave structure-specific dsRNA substrates containing the specific sites 5'-IIUI-3' and 5'-UIUU-3'. Inosine is present in a number of RNAs following editing; the function of inosine-specific endoribonuclease is still unclear: it could either play a regulatory role in edited RNAs, or be involved in antiviral response by removing the hyperedited long viral dsRNA genome that has undergone A-to-I editing. Binds branched DNA structures. Endoribonuclease that specifically cleaves inosine-containing RNAs: cleaves RNA at the second phosphodiester bond 3' to inosine. Active against both single-stranded and double-stranded RNAs. Cleaves tRNAs containing inosine. The chain is Endonuclease V (ENDOV) from Homo sapiens (Human).